Reading from the N-terminus, the 170-residue chain is Large ribosomal subunit protein uL18c (170 aa).

The N-terminal 63 residues, 1–63, are a transit peptide targeting the chloroplast; the sequence is MLASPALAGA…QADRIARHVR (63 aa).

It belongs to the universal ribosomal protein uL18 family. As to quaternary structure, part of the 50S ribosomal subunit; contacts the 5S rRNA.

Its subcellular location is the plastid. The protein resides in the chloroplast. In terms of biological role, binds 5S rRNA, forms part of the central protuberance of the 50S subunit. The chain is Large ribosomal subunit protein uL18c (RPL18) from Oryza sativa subsp. japonica (Rice).